The chain runs to 172 residues: uncharacterized protein (172 aa).

Belongs to the flavoredoxin family. Requires FMN as cofactor.

This is an uncharacterized protein from Pyrococcus abyssi (strain GE5 / Orsay).